Reading from the N-terminus, the 155-residue chain is Ribonuclease H (155 aa).

An RNase H type-1 domain is found at Asn-4–Lys-146. Mg(2+)-binding residues include Asp-13, Glu-51, Asp-73, and Asp-138.

The protein belongs to the RNase H family. Monomer. Mg(2+) serves as cofactor.

The protein resides in the cytoplasm. It catalyses the reaction Endonucleolytic cleavage to 5'-phosphomonoester.. Its function is as follows. Endonuclease that specifically degrades the RNA of RNA-DNA hybrids. This chain is Ribonuclease H, found in Thermoanaerobacter pseudethanolicus (strain ATCC 33223 / 39E) (Clostridium thermohydrosulfuricum).